Reading from the N-terminus, the 497-residue chain is Acetyl-coenzyme A carboxylase carboxyl transferase subunit beta, chloroplastic (497 aa).

The CoA carboxyltransferase N-terminal domain occupies 225–497 (LWVQCENCYG…LHGFLPLNQD (273 aa)). Residues C229, C232, C248, and C251 each coordinate Zn(2+). The C4-type zinc finger occupies 229–251 (CENCYGLNYKKFFSSKMNICEYC).

The protein belongs to the AccD/PCCB family. Acetyl-CoA carboxylase is a heterohexamer composed of biotin carboxyl carrier protein, biotin carboxylase and 2 subunits each of ACCase subunit alpha and ACCase plastid-coded subunit beta (accD). The cofactor is Zn(2+).

It localises to the plastid. It is found in the chloroplast stroma. It carries out the reaction N(6)-carboxybiotinyl-L-lysyl-[protein] + acetyl-CoA = N(6)-biotinyl-L-lysyl-[protein] + malonyl-CoA. It functions in the pathway lipid metabolism; malonyl-CoA biosynthesis; malonyl-CoA from acetyl-CoA: step 1/1. Functionally, component of the acetyl coenzyme A carboxylase (ACC) complex. Biotin carboxylase (BC) catalyzes the carboxylation of biotin on its carrier protein (BCCP) and then the CO(2) group is transferred by the transcarboxylase to acetyl-CoA to form malonyl-CoA. This is Acetyl-coenzyme A carboxylase carboxyl transferase subunit beta, chloroplastic from Phalaenopsis aphrodite subsp. formosana (Moth orchid).